The sequence spans 252 residues: Chitooligosaccharide deacetylase (252 aa).

Positions 61 and 125 each coordinate Mg(2+).

Belongs to the YdjC deacetylase family. ChbG subfamily. As to quaternary structure, homodimer. Requires Mg(2+) as cofactor.

It is found in the cytoplasm. The catalysed reaction is N,N'-diacetylchitobiose + H2O = N-acetyl-beta-D-glucosaminyl-(1-&gt;4)-D-glucosamine + acetate. It carries out the reaction diacetylchitobiose-6'-phosphate + H2O = N'-monoacetylchitobiose-6'-phosphate + acetate. It functions in the pathway glycan degradation; chitin degradation. Functionally, involved in the degradation of chitin. ChbG is essential for growth on the acetylated chitooligosaccharides chitobiose and chitotriose but is dispensable for growth on cellobiose and chitosan dimer, the deacetylated form of chitobiose. Deacetylation of chitobiose-6-P and chitotriose-6-P is necessary for both the activation of the chb promoter by the regulatory protein ChbR and the hydrolysis of phosphorylated beta-glucosides by the phospho-beta-glucosidase ChbF. Catalyzes the removal of only one acetyl group from chitobiose-6-P to yield monoacetylchitobiose-6-P, the inducer of ChbR and the substrate of ChbF. The chain is Chitooligosaccharide deacetylase from Escherichia coli O6:K15:H31 (strain 536 / UPEC).